We begin with the raw amino-acid sequence, 197 residues long: Allatostatins (197 aa).

A signal peptide spans 1-27 (MRSRTSVLTSSLAFLYFFGIVGRSALA). Residues 28–56 (MEETPASSMNLQHYNNMLNPMVFDDTMPE) constitute a propeptide that is removed on maturation. Position 76 is an isoleucine amide (Ile76). Positions 80-86 (WIDTNDN) are excised as a propeptide. 4 positions are modified to leucine amide: Leu96, Leu106, Leu154, and Leu184. The tract at residues 161–197 (YSGGQPLGSKRPNDMLSQRYHFGLGKRMSEDEEESSQ) is disordered. A propeptide spanning residues 188–197 (MSEDEEESSQ) is cleaved from the precursor.

Belongs to the allatostatin family.

The protein localises to the secreted. Its function is as follows. Neuropeptides. This is Allatostatins from Apis mellifera (Honeybee).